A 219-amino-acid chain; its full sequence is 7-cyano-7-deazaguanine synthase (219 aa).

ATP is bound at residue 10-20; it reads FSGGQDSTTCL. 4 residues coordinate Zn(2+): Cys186, Cys195, Cys198, and Cys201.

Belongs to the QueC family. Homodimer. Requires Zn(2+) as cofactor.

It carries out the reaction 7-carboxy-7-deazaguanine + NH4(+) + ATP = 7-cyano-7-deazaguanine + ADP + phosphate + H2O + H(+). Its pathway is purine metabolism; 7-cyano-7-deazaguanine biosynthesis. Its function is as follows. Catalyzes the ATP-dependent conversion of 7-carboxy-7-deazaguanine (CDG) to 7-cyano-7-deazaguanine (preQ(0)). The polypeptide is 7-cyano-7-deazaguanine synthase (Bacillus licheniformis (strain ATCC 14580 / DSM 13 / JCM 2505 / CCUG 7422 / NBRC 12200 / NCIMB 9375 / NCTC 10341 / NRRL NRS-1264 / Gibson 46)).